A 169-amino-acid polypeptide reads, in one-letter code: Anaerobic nitrite reductase NSHB3 (169 aa).

One can recognise a Globin domain in the interval 15-165; sequence RFTEEQEALV…LVAAIKQGMK (151 aa). The Homodimerization motif lies at 48–52; sequence EVAPS. Residues Ser58, Lys72, His76, Arg106, Thr110, and His111 each coordinate heme b. The Homodimerization signature appears at 118–130; that stretch reads DAHFEVAKFALLE.

The protein belongs to the plant globin family. Homodimer. Requires heme b as cofactor.

The protein localises to the cytoplasm. Its subcellular location is the nucleus. The enzyme catalyses Fe(III)-heme b-[protein] + nitric oxide + H2O = Fe(II)-heme b-[protein] + nitrite + 2 H(+). Its function is as follows. Phytoglobin that reduces nitrite to nitric oxide under anoxic conditions (e.g. during flooding or in waterlogged soil). May not function as an oxygen storage or transport protein. Has an unusually high affinity for O(2) through an hexacoordinate heme iron because of a very low dissociation constant. This is Anaerobic nitrite reductase NSHB3 from Oryza sativa subsp. indica (Rice).